We begin with the raw amino-acid sequence, 530 residues long: ATP synthase subunit alpha (530 aa).

Position 172-179 (172-179) interacts with ATP; it reads GDRQTGKT.

It belongs to the ATPase alpha/beta chains family. F-type ATPases have 2 components, CF(1) - the catalytic core - and CF(0) - the membrane proton channel. CF(1) has five subunits: alpha(3), beta(3), gamma(1), delta(1), epsilon(1). CF(0) has three main subunits: a(1), b(2) and c(9-12). The alpha and beta chains form an alternating ring which encloses part of the gamma chain. CF(1) is attached to CF(0) by a central stalk formed by the gamma and epsilon chains, while a peripheral stalk is formed by the delta and b chains.

The protein resides in the cell inner membrane. It catalyses the reaction ATP + H2O + 4 H(+)(in) = ADP + phosphate + 5 H(+)(out). Its function is as follows. Produces ATP from ADP in the presence of a proton gradient across the membrane. The alpha chain is a regulatory subunit. This chain is ATP synthase subunit alpha, found in Phocaeicola vulgatus (strain ATCC 8482 / DSM 1447 / JCM 5826 / CCUG 4940 / NBRC 14291 / NCTC 11154) (Bacteroides vulgatus).